The primary structure comprises 352 residues: Aromatic amino acid aminotransferase (352 aa).

Lys217 bears the N6-(pyridoxal phosphate)lysine mark.

This sequence belongs to the class-II pyridoxal-phosphate-dependent aminotransferase family. As to quaternary structure, homodimer. The cofactor is pyridoxal 5'-phosphate.

The catalysed reaction is an aromatic L-alpha-amino acid + 2-oxoglutarate = an aromatic oxo-acid + L-glutamate. Its function is as follows. Aminotransferase that catalyzes the conversion of aromatic amino acids and 2-oxoglutarate into corresponding aromatic oxo acids and L-glutamate. In Cutibacterium acnes (strain DSM 16379 / KPA171202) (Propionibacterium acnes), this protein is Aromatic amino acid aminotransferase.